Consider the following 218-residue polypeptide: Probable transaldolase (218 aa).

Lys-83 (schiff-base intermediate with substrate) is an active-site residue.

This sequence belongs to the transaldolase family. Type 3B subfamily.

It localises to the cytoplasm. It catalyses the reaction D-sedoheptulose 7-phosphate + D-glyceraldehyde 3-phosphate = D-erythrose 4-phosphate + beta-D-fructose 6-phosphate. It functions in the pathway carbohydrate degradation; pentose phosphate pathway; D-glyceraldehyde 3-phosphate and beta-D-fructose 6-phosphate from D-ribose 5-phosphate and D-xylulose 5-phosphate (non-oxidative stage): step 2/3. In terms of biological role, transaldolase is important for the balance of metabolites in the pentose-phosphate pathway. This is Probable transaldolase (tal) from Mesorhizobium japonicum (strain LMG 29417 / CECT 9101 / MAFF 303099) (Mesorhizobium loti (strain MAFF 303099)).